Here is a 128-residue protein sequence, read N- to C-terminus: Small ribosomal subunit protein uS11m (128 aa).

It belongs to the universal ribosomal protein uS11 family.

The protein localises to the mitochondrion. The protein is Small ribosomal subunit protein uS11m (RPS11) of Prototheca wickerhamii.